The sequence spans 144 residues: Universal stress protein A homolog 1 (144 aa).

The protein belongs to the universal stress protein A family. Homodimer.

Its subcellular location is the cytoplasm. Its function is as follows. Involved in stress response. This Coxiella burnetii (strain RSA 493 / Nine Mile phase I) protein is Universal stress protein A homolog 1 (uspA1).